Consider the following 312-residue polypeptide: Ribonuclease Z (312 aa).

Positions 62, 64, 66, 67, 144, 215, and 273 each coordinate Zn(2+). The active-site Proton acceptor is the Asp-66.

This sequence belongs to the RNase Z family. As to quaternary structure, homodimer. The cofactor is Zn(2+).

The enzyme catalyses Endonucleolytic cleavage of RNA, removing extra 3' nucleotides from tRNA precursor, generating 3' termini of tRNAs. A 3'-hydroxy group is left at the tRNA terminus and a 5'-phosphoryl group is left at the trailer molecule.. Functionally, zinc phosphodiesterase, which displays some tRNA 3'-processing endonuclease activity. Probably involved in tRNA maturation, by removing a 3'-trailer from precursor tRNA. In Prochlorococcus marinus (strain MIT 9312), this protein is Ribonuclease Z.